The sequence spans 409 residues: Elongation factor Tu, chloroplastic (409 aa).

Residues 10–214 (KPHVNIGTIG…AVDAYIPTPE (205 aa)) form the tr-type G domain. Residues 19-26 (GHVDHGKT) form a G1 region. A GTP-binding site is contributed by 19–26 (GHVDHGKT). Thr-26 is a binding site for Mg(2+). The G2 stretch occupies residues 60–64 (GITIN). The tract at residues 81–84 (DCPG) is G3. Residues 81–85 (DCPGH) and 136–139 (NKQD) contribute to the GTP site. The G4 stretch occupies residues 136-139 (NKQD). The interval 174-176 (SAL) is G5.

The protein belongs to the TRAFAC class translation factor GTPase superfamily. Classic translation factor GTPase family. EF-Tu/EF-1A subfamily.

The protein resides in the plastid. Its subcellular location is the chloroplast. The catalysed reaction is GTP + H2O = GDP + phosphate + H(+). In terms of biological role, GTP hydrolase that promotes the GTP-dependent binding of aminoacyl-tRNA to the A-site of ribosomes during protein biosynthesis. This Thalassiosira pseudonana (Marine diatom) protein is Elongation factor Tu, chloroplastic (tufA).